Here is a 146-residue protein sequence, read N- to C-terminus: Transcription antitermination protein NusB (146 aa).

Belongs to the NusB family.

In terms of biological role, involved in transcription antitermination. Required for transcription of ribosomal RNA (rRNA) genes. Binds specifically to the boxA antiterminator sequence of the ribosomal RNA (rrn) operons. The chain is Transcription antitermination protein NusB from Solibacter usitatus (strain Ellin6076).